A 367-amino-acid polypeptide reads, in one-letter code: Dual specificity protein phosphatase 1 (367 aa).

The Rhodanese domain occupies 20-137 (RAAQCLLLDC…FSASCPELCS (118 aa)). A Tyrosine-protein phosphatase domain is found at 173–314 (GPVEILSFLY…LLQFESQVLA (142 aa)). Cysteine 258 (phosphocysteine intermediate) is an active-site residue. Phosphoserine; by MAPK1 and MAPK3 occurs at positions 359 and 364.

Belongs to the protein-tyrosine phosphatase family. Non-receptor class dual specificity subfamily. In terms of processing, phosphorylation at Ser-359 and Ser-364 by MAPK1/ERK2 and MAPK3/ERK1 reduces its rate of degradation. Post-translationally, 'Lys-48'-linked polyubiquitinated by NEURL3, leading to proteasomal degradation. In terms of tissue distribution, brain. High level expression seen in the cingulate gyrus within the retrospinal cortex, ventral and medial divisions of the anterior thalamus and the medial geniculate nucleus. Expressed at moderate levels in the parietal and temporal cortex. Expressed in the cerebellum.

The protein localises to the nucleus. The enzyme catalyses O-phospho-L-tyrosyl-[protein] + H2O = L-tyrosyl-[protein] + phosphate. It catalyses the reaction O-phospho-L-seryl-[protein] + H2O = L-seryl-[protein] + phosphate. The catalysed reaction is O-phospho-L-threonyl-[protein] + H2O = L-threonyl-[protein] + phosphate. Dual specificity phosphatase that dephosphorylates MAP kinase MAPK1/ERK2 on both 'Thr-183' and 'Tyr-185', regulating its activity during the meiotic cell cycle. This is Dual specificity protein phosphatase 1 from Rattus norvegicus (Rat).